Here is an 800-residue protein sequence, read N- to C-terminus: Chondroitin sulfate synthase 1 (800 aa).

Over 1–7 (MAARGRR) the chain is Cytoplasmic. Residues 8–28 (AWLSMLLGLVLGFVLASRLVL) form a helical; Signal-anchor for type II membrane protein membrane-spanning segment. Residues 29–800 (PRASELKRVG…GGSHGSARTA (772 aa)) lie on the Lumenal side of the membrane. Residues 36-66 (RVGPRRRPSPEGCRPGQEASQPGGARGDARG) are disordered. N-linked (GlcNAc...) asparagine glycans are attached at residues Asn188 and Asn622. A divalent metal cation contacts are provided by Asp632 and His746.

This sequence belongs to the chondroitin N-acetylgalactosaminyltransferase family. Co(2+) is required as a cofactor. It depends on Mn(2+) as a cofactor. Cd(2+) serves as cofactor.

The protein localises to the golgi apparatus. The protein resides in the golgi stack membrane. Its subcellular location is the secreted. The enzyme catalyses 3-O-(beta-D-GlcA-(1-&gt;3)-beta-D-GalNAc-(1-&gt;4)-beta-D-GlcA-(1-&gt;3)-beta-D-Gal-(1-&gt;3)-beta-D-Gal-(1-&gt;4)-beta-D-Xyl)-L-seryl-[protein] + UDP-N-acetyl-alpha-D-galactosamine = 3-O-(beta-D-GalNAc-(1-&gt;4)-beta-D-GlcA-(1-&gt;3)-beta-D-GalNAc-(1-&gt;4)-beta-D-GlcA-(1-&gt;3)-beta-D-Gal-(1-&gt;3)-beta-D-Gal-(1-&gt;4)-beta-D-Xyl)-L-seryl-[protein] + UDP + H(+). It catalyses the reaction 3-O-{beta-D-GlcA-(1-&gt;3)-[beta-D-GalNAc-(1-&gt;4)-beta-D-GlcA-(1-&gt;3)](n)-beta-D-GalNAc-(1-&gt;4)-beta-D-GlcA-(1-&gt;3)-beta-D-Gal-(1-&gt;3)-beta-D-Gal-(1-&gt;4)-beta-D-Xyl}-L-seryl-[protein] + UDP-N-acetyl-alpha-D-galactosamine = 3-O-{[beta-D-GalNAc-(1-&gt;4)-beta-D-GlcA-(1-&gt;3)](n+1)-beta-D-GalNAc-(1-&gt;4)-beta-D-GlcA-(1-&gt;3)-beta-D-Gal-(1-&gt;3)-beta-D-Gal-(1-&gt;4)-beta-D-Xyl}-L-seryl-[protein] + UDP + H(+). The catalysed reaction is 3-O-(beta-D-GalNAc-(1-&gt;4)-beta-D-GlcA-(1-&gt;3)-beta-D-Gal-(1-&gt;3)-beta-D-Gal-(1-&gt;4)-beta-D-Xyl)-L-seryl-[protein] + UDP-alpha-D-glucuronate = 3-O-(beta-D-GlcA-(1-&gt;3)-beta-D-GalNAc-(1-&gt;4)-beta-D-GlcA-(1-&gt;3)-beta-D-Gal-(1-&gt;3)-beta-D-Gal-(1-&gt;4)-beta-D-Xyl)-L-seryl-[protein] + UDP + H(+). It carries out the reaction 3-O-{[beta-D-GalNAc-(1-&gt;4)-beta-D-GlcA-(1-&gt;3)](n)-beta-D-GalNAc-(1-&gt;4)-beta-D-GlcA-(1-&gt;3)-beta-D-Gal-(1-&gt;3)-beta-D-Gal-(1-&gt;4)-beta-D-Xyl}-L-seryl-[protein] + UDP-alpha-D-glucuronate = 3-O-{beta-D-GlcA-(1-&gt;3)-[beta-D-GalNAc-(1-&gt;4)-beta-D-GlcA-(1-&gt;3)](n)-beta-D-GalNAc-(1-&gt;4)-beta-D-GlcA-(1-&gt;3)-beta-D-Gal-(1-&gt;3)-beta-D-Gal-(1-&gt;4)-beta-D-Xyl}-L-seryl-[protein] + UDP + H(+). Has both beta-1,3-glucuronic acid and beta-1,4-N-acetylgalactosamine transferase activity. Transfers glucuronic acid (GlcUA) from UDP-GlcUA and N-acetylgalactosamine (GalNAc) from UDP-GalNAc to the non-reducing end of the elongating chondroitin polymer. Involved in the negative control of osteogenesis likely through the modulation of NOTCH signaling. This is Chondroitin sulfate synthase 1 (Chsy1) from Mus musculus (Mouse).